The following is a 385-amino-acid chain: Trans-enoyl reductase tasC (385 aa).

49–52 (VDTK) is an NADP(+) binding site. 136-143 (NSWYTVAW) contacts substrate. Residues 196 to 199 (SSST), 219 to 222 (SARN), and 284 to 285 (LD) each bind NADP(+). 305-309 (GPELM) provides a ligand contact to substrate. 374–375 (VS) contributes to the NADP(+) binding site.

The protein belongs to the zinc-containing alcohol dehydrogenase family. In terms of assembly, monomer.

It catalyses the reaction (2S,4S)-4-hydroxy-4-methylglutamate + 8 malonyl-CoA + 3 S-adenosyl-L-methionine + ATP + 8 NADPH + 11 H(+) = (2S)-3-[(2S)-3,5-dioxo-4-[(2E,4R,6R,8E,10E,12E)-4,6,12-trimethyltetradeca-2,8,10,12-tetraenoyl]pyrrolidin-2-yl]-2-hydroxy-2-methylpropanoate + AMP + 3 S-adenosyl-L-homocysteine + 8 CO2 + diphosphate + 8 NADP(+) + 8 CoA + 6 H2O. It carries out the reaction (2S,4R)-4-hydroxy-4-methylglutamate + 8 malonyl-CoA + 3 S-adenosyl-L-methionine + ATP + 8 NADPH + 11 H(+) = (2R)-3-[(2S)-3,5-dioxo-4-[(2E,4R,6R,8E,10E,12E)-4,6,12-trimethyltetradeca-2,8,10,12-tetraenoyl]pyrrolidin-2-yl]-2-hydroxy-2-methylpropanoate + AMP + 3 S-adenosyl-L-homocysteine + 8 CO2 + diphosphate + 8 NADP(+) + 8 CoA + 6 H2O. It participates in secondary metabolite biosynthesis. Trans-enoyl reductase; part of the gene cluster that mediates the biosynthesis of the tetramic acids Sch210971 and Sch210972, potential anti-HIV fungal natural product that contain a decalin core. The PKS module of tasS together with the enoylreductase tasC catalyze the formation of the polyketide unit which is then conjugated to 4-hydroxyl-4-methyl glutamate (HMG) by the condensation domain of the tasS NRPS module. One unique structural feature of Sch210971 and Sch210972 is the tetramic acid motif proposed to be derived from the non-proteinogenic amino acid HMG, by a Dieckmann-type condensation catalyzed by the reductase domain of tasS. The aldolase tasA catalyzes the aldol condensation of 2 molecules of pyruvic acid to yield the intermediate 4-hydroxyl-4-methyl-2-oxoglutarate (HMOG), which can then be stereoselectively transaminated, may be by tasG, to form HMG. The Diels-Alderase tas3 then uses the Dieckmann product of tasS as substrate and catalyzes the Diels-Alder cycloaddition to form the decalin ring of Sch210971 and Sch210972. This is Trans-enoyl reductase tasC from Hapsidospora irregularis.